The sequence spans 378 residues: Aminotransferase apf4 (378 aa).

Arginine 88 provides a ligand contact to pyridoxal 5'-phosphate. N6-(pyridoxal phosphate)lysine is present on lysine 189. Residue glutamate 228 coordinates pyridoxal 5'-phosphate. The disordered stretch occupies residues glutamate 359–glutamate 378.

Belongs to the class-IV pyridoxal-phosphate-dependent aminotransferase family. Pyridoxal 5'-phosphate is required as a cofactor.

The protein operates within secondary metabolite biosynthesis. In terms of biological role, aminotransferase; part of the gene cluster that mediates the biosynthesis of the cyclic tetrapeptide apicidin F (APF). The non-ribosomal peptide synthetase apf1 incorporates four different amino acids to produce apicidin F: L-phenylalanine, D-pipecolic acid (D-pip), N-methoxy-L-tryptophan and L-2-aminooctanedioic acid. L-Phenylalanine is the only proteinogenic amino acid directly used by apf1. The 3 other apf1 substrates are non-proteinogenic and have to be modified by other enzymes of the cluster. Lysine is converted to delta-1-pyrroline-5-carboxylate (P5C) which is reduced to L-pipecolic acid (L-pip) by apf3. L-pip is epimerized to D-pip, probably by apf1 activity, prior to incorporation. L-Tryptophan is N-oxidyzed by one of the cytochrome P450 monooxygenases (apf7 or apf8), and further methylated at the hydroxy group by the O-methyltransferase apf6 to yield N-methoxy-L-tryptophan. The synthesis of the fourth apf1 substrate is more complex. The fatty acid synthase apf5 is involved in the synthesis of the octanoic acid backbone of L-2-aminooctanedioic acid by fixing one acetyl-CoA unit and three malonyl-CoA units. Then one of the cytochrome P450 monooxygenases (apf7 or apf8) may oxidize this backbone to 2-oxooctanoic acid. The aminotransferase apf4 is predicted to catalyze the exchange of the keto group with an amino group. The next step would be the oxidation of 2-aminooctanoic acid by one of the cytochrome P450 monooxygenases (apf7 or apf8). The last step is the oxidation of 2-amino-8-hydroxyoctanoic acid to 2-aminooctanedioic acid is catalyzed by the FAD-dependent monooxygenase apf9. This Gibberella fujikuroi (strain CBS 195.34 / IMI 58289 / NRRL A-6831) (Bakanae and foot rot disease fungus) protein is Aminotransferase apf4.